The sequence spans 309 residues: Ribonuclease Z (309 aa).

The Zn(2+) site is built by histidine 63, histidine 65, aspartate 67, histidine 68, histidine 141, aspartate 212, and histidine 270. Catalysis depends on aspartate 67, which acts as the Proton acceptor.

Belongs to the RNase Z family. In terms of assembly, homodimer. Zn(2+) is required as a cofactor.

The catalysed reaction is Endonucleolytic cleavage of RNA, removing extra 3' nucleotides from tRNA precursor, generating 3' termini of tRNAs. A 3'-hydroxy group is left at the tRNA terminus and a 5'-phosphoryl group is left at the trailer molecule.. Functionally, zinc phosphodiesterase, which displays some tRNA 3'-processing endonuclease activity. Probably involved in tRNA maturation, by removing a 3'-trailer from precursor tRNA. The chain is Ribonuclease Z from Limosilactobacillus reuteri (strain DSM 20016) (Lactobacillus reuteri).